Here is a 59-residue protein sequence, read N- to C-terminus: Large ribosomal subunit protein bL32 (59 aa).

Residues 1-20 (MAVQKNKPTRSKRGMRRSHD) form a disordered region. Positions 7–19 (KPTRSKRGMRRSH) are enriched in basic residues.

The protein belongs to the bacterial ribosomal protein bL32 family.

The chain is Large ribosomal subunit protein bL32 from Wigglesworthia glossinidia brevipalpis.